The chain runs to 445 residues: MSNNIQFKVQPGGTIKGRIRVPGDKSISHRSIMLGSIAEGVTQVTGFLEGDDSLATLKAFQAMGVEIEGPNQGNVTIHGVGLKGLKKPDHPLDMGNSGTAMRLMAGILAGQDFECELIGDASLSKRPMKRVTSPLADMGARIDTAEGGKPPLKIHPSSDLKGIDYTLPMASAQVKSCVLLAGLYAEGETTVIEPAPTRDHTERMLNGFGYPVQSEKLDEMQTKVTLAGGGKLTAKNIDVPSDISSAAFFMVAAAVAEEADLVIEHVGINPTRTGVIDILKLMGADITLENEATVGGEPVADVRIKSSKLKGIKIPEALVPLAIDEFPVLFVAAASAEGQTILSGAEELRVKECDRIQVMADALVAVGIDAQPTEDGMIINGGLQKAQSAEIQSHHDHRISMAMTIAGLNAVSEITIDDCANVRTSFPTFIELANTVGLNVTAVEV.

Residues lysine 25, serine 26, and arginine 30 each coordinate 3-phosphoshikimate. Lysine 25 lines the phosphoenolpyruvate pocket. The phosphoenolpyruvate site is built by glycine 98 and arginine 126. Positions 171, 173, 324, and 351 each coordinate 3-phosphoshikimate. Phosphoenolpyruvate is bound at residue glutamine 173. The Proton acceptor role is filled by aspartate 324. Positions 355 and 398 each coordinate phosphoenolpyruvate.

This sequence belongs to the EPSP synthase family. In terms of assembly, monomer.

The protein localises to the cytoplasm. It catalyses the reaction 3-phosphoshikimate + phosphoenolpyruvate = 5-O-(1-carboxyvinyl)-3-phosphoshikimate + phosphate. It participates in metabolic intermediate biosynthesis; chorismate biosynthesis; chorismate from D-erythrose 4-phosphate and phosphoenolpyruvate: step 6/7. Catalyzes the transfer of the enolpyruvyl moiety of phosphoenolpyruvate (PEP) to the 5-hydroxyl of shikimate-3-phosphate (S3P) to produce enolpyruvyl shikimate-3-phosphate and inorganic phosphate. This Hydrogenovibrio crunogenus (strain DSM 25203 / XCL-2) (Thiomicrospira crunogena) protein is 3-phosphoshikimate 1-carboxyvinyltransferase.